The following is a 169-amino-acid chain: Secreted LysM effector Blys5 (169 aa).

An N-terminal signal peptide occupies residues 1-19 (MKLSVISAVFVSLAAAAAA). 2 LysM domains span residues 47–94 (TYYQ…YYCV) and 121–167 (QWYK…NVCV).

This sequence belongs to the secreted LysM effector family.

Secreted effector that enables the plant pathogenic fungus to manipulate host defenses for successful infection. Required for the full virulence to infect insect hosts. Protects fungal hyphae against the hydrolytic activity of chitinase and plays an important role in evasion of insect immunities. Binds chitin and can additionally bind chitosan and cellulose. Coats and protects the cell walls of insect pathogens from host cell recognition and additionally shields fungal cells from the hydrolysis of insect chitinases. The protein is Secreted LysM effector Blys5 of Beauveria bassiana (strain ARSEF 2860) (White muscardine disease fungus).